We begin with the raw amino-acid sequence, 40 residues long: Photosystem II reaction center protein J (40 aa).

The chain crosses the membrane as a helical span at residues 8-28; sequence IPLWLVATVAGLAAIGVLGIF.

The protein belongs to the PsbJ family. PSII is composed of 1 copy each of membrane proteins PsbA, PsbB, PsbC, PsbD, PsbE, PsbF, PsbH, PsbI, PsbJ, PsbK, PsbL, PsbM, PsbT, PsbX, PsbY, PsbZ, Psb30/Ycf12, at least 3 peripheral proteins of the oxygen-evolving complex and a large number of cofactors. It forms dimeric complexes.

The protein resides in the plastid. It localises to the cyanelle thylakoid membrane. Its function is as follows. One of the components of the core complex of photosystem II (PSII). PSII is a light-driven water:plastoquinone oxidoreductase that uses light energy to abstract electrons from H(2)O, generating O(2) and a proton gradient subsequently used for ATP formation. It consists of a core antenna complex that captures photons, and an electron transfer chain that converts photonic excitation into a charge separation. This is Photosystem II reaction center protein J from Cyanophora paradoxa.